Reading from the N-terminus, the 200-residue chain is Recombination protein RecR (200 aa).

The segment at 60 to 75 (CVYCQALTEDDVCNIC) adopts a C4-type zinc-finger fold. The region spanning 83 to 177 (TKLCIIESML…KISRIGFGVP (95 aa)) is the Toprim domain.

The protein belongs to the RecR family.

Functionally, may play a role in DNA repair. It seems to be involved in an RecBC-independent recombinational process of DNA repair. It may act with RecF and RecO. In Francisella tularensis subsp. tularensis (strain WY96-3418), this protein is Recombination protein RecR.